A 459-amino-acid chain; its full sequence is Diaminopimelate decarboxylase (459 aa).

The residue at position 89 (K89) is an N6-(pyridoxal phosphate)lysine. Residues G271 and 313 to 316 (EPGR) each bind pyridoxal 5'-phosphate. R316, R357, and Y361 together coordinate substrate. C388 functions as the Proton donor in the catalytic mechanism. The substrate site is built by E389 and Y418. Y418 is a binding site for pyridoxal 5'-phosphate.

The protein belongs to the Orn/Lys/Arg decarboxylase class-II family. LysA subfamily. As to quaternary structure, homodimer. Requires pyridoxal 5'-phosphate as cofactor.

It carries out the reaction meso-2,6-diaminopimelate + H(+) = L-lysine + CO2. The protein operates within amino-acid biosynthesis; L-lysine biosynthesis via DAP pathway; L-lysine from DL-2,6-diaminopimelate: step 1/1. Functionally, specifically catalyzes the decarboxylation of meso-diaminopimelate (meso-DAP) to L-lysine. The polypeptide is Diaminopimelate decarboxylase (Corynebacterium efficiens (strain DSM 44549 / YS-314 / AJ 12310 / JCM 11189 / NBRC 100395)).